The following is a 290-amino-acid chain: Probable protein phosphatase 2C 20 (290 aa).

Residues 31–278 (AHGYDFVKGK…DDISCIVPCF (248 aa)) enclose the PPM-type phosphatase domain. Positions 68, 69, 230, and 269 each coordinate Mn(2+).

The protein belongs to the PP2C family. Mg(2+) serves as cofactor. Requires Mn(2+) as cofactor.

The enzyme catalyses O-phospho-L-seryl-[protein] + H2O = L-seryl-[protein] + phosphate. It catalyses the reaction O-phospho-L-threonyl-[protein] + H2O = L-threonyl-[protein] + phosphate. Its function is as follows. May be involved in defense signaling. This Arabidopsis thaliana (Mouse-ear cress) protein is Probable protein phosphatase 2C 20 (PPC3-1.2).